We begin with the raw amino-acid sequence, 177 residues long: Large ribosomal subunit protein uL5c (177 aa).

The protein belongs to the universal ribosomal protein uL5 family. In terms of assembly, part of the 50S ribosomal subunit; contacts the 5S rRNA.

The protein localises to the plastid. It is found in the chloroplast. Functionally, binds 5S rRNA, forms part of the central protuberance of the 50S subunit. The protein is Large ribosomal subunit protein uL5c (rpl5) of Cyanidioschyzon merolae (strain NIES-3377 / 10D) (Unicellular red alga).